The primary structure comprises 545 residues: GMP synthase [glutamine-hydrolyzing] (545 aa).

The 195-residue stretch at Thr-17–Asp-211 folds into the Glutamine amidotransferase type-1 domain. Residue Cys-93 is the Nucleophile of the active site. Active-site residues include His-185 and Glu-187. The 209-residue stretch at Trp-212 to Arg-420 folds into the GMPS ATP-PPase domain. Position 240-246 (Ser-240–Thr-246) interacts with ATP. Arg-313, Asp-482, Lys-537, and Glu-543 together coordinate XMP.

Homodimer. Mg(2+) serves as cofactor.

It localises to the cytoplasm. The protein resides in the cytosol. The enzyme catalyses XMP + L-glutamine + ATP + H2O = GMP + L-glutamate + AMP + diphosphate + 2 H(+). It functions in the pathway purine metabolism; GMP biosynthesis; GMP from XMP (L-Gln route): step 1/1. Its function is as follows. Catalyzes the conversion of xanthine monophosphate (XMP) to GMP in the presence of glutamine and ATP through an adenyl-XMP intermediate. This is GMP synthase [glutamine-hydrolyzing] (GUA1) from Gibberella zeae (strain ATCC MYA-4620 / CBS 123657 / FGSC 9075 / NRRL 31084 / PH-1) (Wheat head blight fungus).